We begin with the raw amino-acid sequence, 283 residues long: Acetylglutamate kinase (283 aa).

Substrate-binding positions include 64-65 (GG), Arg86, and Asn178.

This sequence belongs to the acetylglutamate kinase family. ArgB subfamily.

It is found in the cytoplasm. The catalysed reaction is N-acetyl-L-glutamate + ATP = N-acetyl-L-glutamyl 5-phosphate + ADP. It participates in amino-acid biosynthesis; L-arginine biosynthesis; N(2)-acetyl-L-ornithine from L-glutamate: step 2/4. In terms of biological role, catalyzes the ATP-dependent phosphorylation of N-acetyl-L-glutamate. The polypeptide is Acetylglutamate kinase (Lactococcus lactis subsp. cremoris (strain MG1363)).